The chain runs to 174 residues: Transcription antitermination protein NusB (174 aa).

The segment covering 1-11 (MSEVETTNDQT) has biased composition (polar residues). Residues 1–29 (MSEVETTNDQTPAPKRKDKKPSRSQLRSA) are disordered.

It belongs to the NusB family.

In terms of biological role, involved in transcription antitermination. Required for transcription of ribosomal RNA (rRNA) genes. Binds specifically to the boxA antiterminator sequence of the ribosomal RNA (rrn) operons. In Marinomonas sp. (strain MWYL1), this protein is Transcription antitermination protein NusB.